The chain runs to 160 residues: MKHLAIYPGSFDPLTNGHLDILQRSLGLFDKVIIAIAVNSNKSTLFSIEERLEFIHKVTQGLKGLEIDTFQGLTVDYCNKVGANSIIRGLRAVTDFDYEYAISLMNKKLAPNVETVFLMSSGEYSFISSTIVKEVARHGRDVSNQVPEIVGKALLKKLSQ.

Substrate is bound at residue Ser10. ATP-binding positions include 10–11 (SF) and His18. The substrate site is built by Lys42, Thr74, and Arg88. ATP is bound by residues 89-91 (GLR), Glu99, and 124-130 (YSFISST).

The protein belongs to the bacterial CoaD family. In terms of assembly, homohexamer. It depends on Mg(2+) as a cofactor.

It localises to the cytoplasm. It carries out the reaction (R)-4'-phosphopantetheine + ATP + H(+) = 3'-dephospho-CoA + diphosphate. Its pathway is cofactor biosynthesis; coenzyme A biosynthesis; CoA from (R)-pantothenate: step 4/5. Functionally, reversibly transfers an adenylyl group from ATP to 4'-phosphopantetheine, yielding dephospho-CoA (dPCoA) and pyrophosphate. In Leptospira borgpetersenii serovar Hardjo-bovis (strain L550), this protein is Phosphopantetheine adenylyltransferase.